The chain runs to 451 residues: D(1A) dopamine receptor (451 aa).

The Extracellular segment spans residues 1 to 22 (MTFNITSMDEDVLLTERESSFR). A glycan (N-linked (GlcNAc...) asparagine) is linked at asparagine 4. Residues 23 to 48 (VLTGCFLSVLILSTLLGNTLVCAAVI) traverse the membrane as a helical segment. The Cytoplasmic portion of the chain corresponds to 49 to 59 (RFRHLRSKVTN). The chain crosses the membrane as a helical span at residues 60 to 86 (FFVISLAVSDLLVAVLVMPWKAVAEIA). Topologically, residues 87–95 (GFWPFGTFC) are extracellular. The cysteines at positions 95 and 185 are disulfide-linked. Residues 96 to 118 (NIWVAFDIMCSTASILNLCVISV) traverse the membrane as a helical segment. Over 119 to 137 (DRYWAISSPFRYERKMTPK) the chain is Cytoplasmic. The chain crosses the membrane as a helical span at residues 138–162 (VAFIMIGVAWTLSVLISFIPVQLNW). Over 163-191 (HKAKTTSFFDLNITLHDRTMDNCDSSLNR) the chain is Extracellular. A helical transmembrane segment spans residues 192-217 (TYAISSSLISFYIPVAIMIVTYTRIY). The Cytoplasmic segment spans residues 218-271 (RIAAKQIRRISALERAAVHAKNCQNSTSNRNSLDCQQPESSLKTSFKRETKVLK). The helical transmembrane segment at 272-298 (TLSVIMGVFVCCWLPFFILNCIVPFCD) threads the bilayer. The Extracellular portion of the chain corresponds to 299–315 (PSLTTSGTEPFCISSTT). The helical transmembrane segment at 316-340 (FDVFVWFGWANSSLNPIIYAFNADF) threads the bilayer. The Cytoplasmic segment spans residues 341–451 (RKAFSNLLGC…PITQNGQPKT (111 aa)). Residue cysteine 350 is the site of S-palmitoyl cysteine attachment.

It belongs to the G-protein coupled receptor 1 family. In terms of tissue distribution, brain.

The protein resides in the cell membrane. It localises to the cell projection. Its subcellular location is the cilium membrane. Its function is as follows. Dopamine receptor whose activity is mediated by G proteins which activate adenylyl cyclase. The protein is D(1A) dopamine receptor (drd1) of Xenopus laevis (African clawed frog).